A 352-amino-acid chain; its full sequence is Ubiquitin thioesterase otulin (352 aa).

The segment at 1–48 (MSRGTMPQPEAWPGASCAETPAREAAATARDGGKAAASGQPRPEMQCP) is disordered. Residues 18–37 (AETPAREAAATARDGGKAAA) are compositionally biased toward low complexity. The PIM motif motif lies at 52-57 (EEDMYR). Residue Y56 is modified to Phosphotyrosine. Linear diubiquitin binding stretches follow at residues 95–96 (EW) and 124–126 (RGD). Residues 118–346 (TSIRRVRGDN…DRHYNIPVRV (229 aa)) form the OTU domain. D126 is a catalytic residue. Catalysis depends on C129, which acts as the Nucleophile. Linear diubiquitin binding stretches follow at residues 255–259 (FFSVL), 283–289 (TGGLEQV), and 336–338 (DDR). H339 is an active-site residue.

This sequence belongs to the peptidase C65 family. Otulin subfamily. As to quaternary structure, interacts (via the PUB domain) with RNF31 (via the PIM motif); the interaction is direct. Interacts with DVL2. Post-translationally, ubiquitinated. Acetylated. In terms of processing, phosphorylated. Phosphorylation at Tyr-56 prevents interaction with RNF31; dephosphorylation promotes interaction with RNF31 and the LUBAC complex.

Its subcellular location is the cytoplasm. The enzyme catalyses Thiol-dependent hydrolysis of ester, thioester, amide, peptide and isopeptide bonds formed by the C-terminal Gly of ubiquitin (a 76-residue protein attached to proteins as an intracellular targeting signal).. Functionally, deubiquitinase that specifically removes linear ('Met-1'-linked) polyubiquitin chains to substrates and acts as a regulator of angiogenesis and innate immune response. Required during angiogenesis, craniofacial and neuronal development by regulating the canonical Wnt signaling together with the LUBAC complex. Acts as a negative regulator of NF-kappa-B by regulating the activity of the LUBAC complex. OTULIN function is mainly restricted to homeostasis of the LUBAC complex: acts by removing 'Met-1'-linked autoubiquitination of the LUBAC complex, thereby preventing inactivation of the LUBAC complex. Acts as a key negative regulator of inflammation by restricting spontaneous inflammation and maintaining immune homeostasis. In myeloid cell, required to prevent unwarranted secretion of cytokines leading to inflammation and autoimmunity by restricting linear polyubiquitin formation. Plays a role in innate immune response by restricting linear polyubiquitin formation on LUBAC complex in response to NOD2 stimulation, probably to limit NOD2-dependent pro-inflammatory signaling. The sequence is that of Ubiquitin thioesterase otulin from Homo sapiens (Human).